Here is a 244-residue protein sequence, read N- to C-terminus: AA9 family lytic polysaccharide monooxygenase B (244 aa).

Residues 1-19 (MFLVPLLAALSLSAPKVAA) form the signal peptide. Cu(2+) is bound at residue H20. Position 39 (Y39) interacts with (1,4-beta-D-glucosyl)n. 2 disulfides stabilise this stretch: C68–C189 and C111–C115. Residue H99 participates in Cu(2+) binding. N-linked (GlcNAc...) asparagine glycosylation occurs at N152. H178 and Q184 together coordinate O2. Y186 serves as a coordination point for Cu(2+). D224, Y226, and E229 together coordinate (1,4-beta-D-glucosyl)n. Residue N233 is glycosylated (N-linked (GlcNAc...) asparagine).

It belongs to the polysaccharide monooxygenase AA9 family. Cu(2+) serves as cofactor.

The protein resides in the secreted. It carries out the reaction [(1-&gt;4)-beta-D-glucosyl]n+m + reduced acceptor + O2 = 4-dehydro-beta-D-glucosyl-[(1-&gt;4)-beta-D-glucosyl]n-1 + [(1-&gt;4)-beta-D-glucosyl]m + acceptor + H2O.. Functionally, lytic polysaccharide monooxygenase (LPMO) that depolymerizes crystalline and amorphous polysaccharides via the oxidation of scissile alpha- or beta-(1-4)-glycosidic bonds, yielding specifically C1 oxidation product. Catalysis by LPMOs requires the reduction of the active-site copper from Cu(II) to Cu(I) by a reducing agent and H(2)O(2) or O(2) as a cosubstrate. Displays catalytic activity on insoluble cellulose using I-beta microfibril model substrate. This is AA9 family lytic polysaccharide monooxygenase B from Heterobasidion irregulare (strain TC 32-1).